A 323-amino-acid chain; its full sequence is ADP-ribose glycohydrolase MACROD1 (323 aa).

N6-succinyllysine is present on residues Lys-94, Lys-101, and Lys-127. Lys-136 participates in a covalent cross-link: Glycyl lysine isopeptide (Lys-Gly) (interchain with G-Cter in SUMO2). The region spanning Asp-139–Phe-320 is the Macro domain. Residue Gly-157–Ile-159 participates in substrate binding. Position 161 is an N6-acetyllysine (Lys-161). Substrate contacts are provided by residues Ala-170–Asn-172, Gly-177–Asp-182, Ile-265–Gly-271, and Phe-304.

The protein belongs to the MacroD-type family. MacroD1/2-like subfamily. In terms of assembly, interacts with ESR1; Interacts in a manner that is estrogen independent but is enhanced by estrogen. Interacts (via macro domain) with AR.

The protein resides in the nucleus. The catalysed reaction is 3''-O-acetyl-ADP-D-ribose + H2O = ADP-D-ribose + acetate + H(+). The enzyme catalyses 2''-O-acetyl-ADP-D-ribose + H2O = ADP-D-ribose + acetate + H(+). It carries out the reaction 4-O-(ADP-D-ribosyl)-L-aspartyl-[protein] + H2O = L-aspartyl-[protein] + ADP-D-ribose + H(+). It catalyses the reaction 5-O-(ADP-D-ribosyl)-L-glutamyl-[protein] + H2O = L-glutamyl-[protein] + ADP-D-ribose + H(+). The catalysed reaction is alpha-NAD(+) + H2O = ADP-D-ribose + nicotinamide + H(+). With respect to regulation, subject to competitive inhibition by the product ADP-ribose. Its function is as follows. Removes ADP-ribose from aspartate and glutamate residues in proteins bearing a single ADP-ribose moiety. Inactive towards proteins bearing poly-ADP-ribose. Deacetylates O-acetyl-ADP ribose, a signaling molecule generated by the deacetylation of acetylated lysine residues in histones and other proteins. Plays a role in estrogen signaling. Binds to androgen receptor (AR) and amplifies the transactivation function of AR in response to androgen. May play an important role in carcinogenesis and/or progression of hormone-dependent cancers by feed-forward mechanism that activates ESR1 transactivation. Could be an ESR1 coactivator, providing a positive feedback regulatory loop for ESR1 signal transduction. Could be involved in invasive growth by down-regulating CDH1 in endometrial cancer cells. Enhances ESR1-mediated transcription activity. The chain is ADP-ribose glycohydrolase MACROD1 from Mus musculus (Mouse).